Here is a 374-residue protein sequence, read N- to C-terminus: Cell division protein C (374 aa).

In terms of domain architecture, MIT spans Ala-11 to Glu-73. Gly-144 to Thr-151 contributes to the ATP binding site.

Belongs to the AAA ATPase family. Interacts with CdvB.

It localises to the cytoplasm. Its subcellular location is the nucleoid. Its function is as follows. Part of a cell division machinery. The CdvA, CdvB and CdvC proteins polymerize between segregating nucleoids and persist throughout cell division, forming a successively smaller structure during constriction. The polypeptide is Cell division protein C (Sulfolobus acidocaldarius (strain ATCC 33909 / DSM 639 / JCM 8929 / NBRC 15157 / NCIMB 11770)).